A 245-amino-acid chain; its full sequence is 2,3-bisphosphoglycerate-dependent phosphoglycerate mutase (245 aa).

Substrate contacts are provided by residues 8-15, 21-22, arginine 60, 87-90, lysine 98, 114-115, and 183-184; these read RHGQSLWN, TG, ERHY, RR, and GN. Histidine 9 serves as the catalytic Tele-phosphohistidine intermediate. Catalysis depends on glutamate 87, which acts as the Proton donor/acceptor.

This sequence belongs to the phosphoglycerate mutase family. BPG-dependent PGAM subfamily.

The enzyme catalyses (2R)-2-phosphoglycerate = (2R)-3-phosphoglycerate. It functions in the pathway carbohydrate degradation; glycolysis; pyruvate from D-glyceraldehyde 3-phosphate: step 3/5. Catalyzes the interconversion of 2-phosphoglycerate and 3-phosphoglycerate. The sequence is that of 2,3-bisphosphoglycerate-dependent phosphoglycerate mutase from Bacillus anthracis (strain A0248).